The chain runs to 72 residues: DNA-directed RNA polymerase subunit omega (72 aa).

The protein belongs to the RNA polymerase subunit omega family. As to quaternary structure, the RNAP catalytic core consists of 2 alpha, 1 beta, 1 beta' and 1 omega subunit. When a sigma factor is associated with the core the holoenzyme is formed, which can initiate transcription.

It catalyses the reaction RNA(n) + a ribonucleoside 5'-triphosphate = RNA(n+1) + diphosphate. Functionally, promotes RNA polymerase assembly. Latches the N- and C-terminal regions of the beta' subunit thereby facilitating its interaction with the beta and alpha subunits. This is DNA-directed RNA polymerase subunit omega from Francisella tularensis subsp. holarctica (strain LVS).